Reading from the N-terminus, the 340-residue chain is Aspartate-semialdehyde dehydrogenase (340 aa).

NADP(+) is bound by residues T11–V14 and R39–S40. R100 serves as a coordination point for phosphate. C131 serves as the catalytic Acyl-thioester intermediate. Q158 lines the substrate pocket. Residue S161–G162 coordinates NADP(+). K216 provides a ligand contact to phosphate. Residue R238 coordinates substrate. H245 acts as the Proton acceptor in catalysis. An NADP(+)-binding site is contributed by N318.

Belongs to the aspartate-semialdehyde dehydrogenase family. In terms of assembly, homodimer.

The enzyme catalyses L-aspartate 4-semialdehyde + phosphate + NADP(+) = 4-phospho-L-aspartate + NADPH + H(+). It functions in the pathway amino-acid biosynthesis; L-lysine biosynthesis via DAP pathway; (S)-tetrahydrodipicolinate from L-aspartate: step 2/4. The protein operates within amino-acid biosynthesis; L-methionine biosynthesis via de novo pathway; L-homoserine from L-aspartate: step 2/3. It participates in amino-acid biosynthesis; L-threonine biosynthesis; L-threonine from L-aspartate: step 2/5. Its function is as follows. Catalyzes the NADPH-dependent formation of L-aspartate-semialdehyde (L-ASA) by the reductive dephosphorylation of L-aspartyl-4-phosphate. The sequence is that of Aspartate-semialdehyde dehydrogenase from Aquifex aeolicus (strain VF5).